The primary structure comprises 244 residues: MSKFYIENINLLNSEKKNNILSELNLLLSNYSAEERISWALSHLPHTQIMSSSFGIQSTVLLHLIIKKKPDIPVILIDTGYLFPETYNFIDFLTNKFHLNLKVFRSTISSAWQEARYGKLWEKGIEGIDFYNNINKVQPMNFALNELSVQTWFAGLRHDQSKSRNLLPYLSIKKGIFKILPILDWSKDKIKDYLKENNLDTHPLYNDGYSSVGDTHTTKKHMPGMLEEETRFFGLKRECGLHEN.

Residue C239 is the Nucleophile; cysteine thiosulfonate intermediate of the active site.

The protein belongs to the PAPS reductase family. CysH subfamily.

It localises to the cytoplasm. The catalysed reaction is [thioredoxin]-disulfide + sulfite + adenosine 3',5'-bisphosphate + 2 H(+) = [thioredoxin]-dithiol + 3'-phosphoadenylyl sulfate. The protein operates within sulfur metabolism; hydrogen sulfide biosynthesis; sulfite from sulfate: step 3/3. Catalyzes the formation of sulfite from phosphoadenosine 5'-phosphosulfate (PAPS) using thioredoxin as an electron donor. The sequence is that of Phosphoadenosine 5'-phosphosulfate reductase from Buchnera aphidicola subsp. Acyrthosiphon pisum (strain 5A).